Consider the following 118-residue polypeptide: V-type proton ATPase subunit G 2 (118 aa).

A disordered region spans residues Ala-25–Arg-90. The segment covering Gln-35–Gln-56 has biased composition (basic and acidic residues). 2 stretches are compositionally biased toward polar residues: residues Ser-57–Leu-69 and Arg-78–Gln-89.

Belongs to the V-ATPase G subunit family. V-ATPase is a heteromultimeric enzyme made up of two complexes: the ATP-hydrolytic V1 complex and the proton translocation V0 complex. The V1 complex consists of three catalytic AB heterodimers that form a heterohexamer, three peripheral stalks each consisting of EG heterodimers, one central rotor including subunits D and F, and the regulatory subunits C and H. The proton translocation complex V0 consists of the proton transport subunit a, a ring of proteolipid subunits c9c'', rotary subunit d, subunits e and f, and the accessory subunits ATP6AP1/Ac45 and ATP6AP2/PRR. Brain.

The protein resides in the melanosome. Its subcellular location is the cytoplasmic vesicle. It is found in the clathrin-coated vesicle membrane. Its function is as follows. Subunit of the V1 complex of vacuolar(H+)-ATPase (V-ATPase), a multisubunit enzyme composed of a peripheral complex (V1) that hydrolyzes ATP and a membrane integral complex (V0) that translocates protons. V-ATPase is responsible for acidifying and maintaining the pH of intracellular compartments and in some cell types, is targeted to the plasma membrane, where it is responsible for acidifying the extracellular environment. In Homo sapiens (Human), this protein is V-type proton ATPase subunit G 2 (ATP6V1G2).